A 91-amino-acid polypeptide reads, in one-letter code: Small ribosomal subunit protein bS16 (91 aa).

Belongs to the bacterial ribosomal protein bS16 family.

In Levilactobacillus brevis (strain ATCC 367 / BCRC 12310 / CIP 105137 / JCM 1170 / LMG 11437 / NCIMB 947 / NCTC 947) (Lactobacillus brevis), this protein is Small ribosomal subunit protein bS16.